The following is a 188-amino-acid chain: Putative manganese efflux pump MntP (188 aa).

Helical transmembrane passes span 3–23 (LFSL…VSIC), 39–59 (AGLY…LLGV), 65–85 (ITDY…VNML), 110–130 (LGFA…FLSV), 131–151 (DIYS…IIGV), and 167–187 (ILGG…HTLF).

The protein belongs to the MntP (TC 9.B.29) family.

It is found in the cell inner membrane. In terms of biological role, probably functions as a manganese efflux pump. The sequence is that of Putative manganese efflux pump MntP from Mannheimia succiniciproducens (strain KCTC 0769BP / MBEL55E).